The chain runs to 493 residues: Glutamyl-tRNA(Gln) amidotransferase subunit A (493 aa).

Catalysis depends on charge relay system residues lysine 78 and serine 158. Serine 182 acts as the Acyl-ester intermediate in catalysis.

It belongs to the amidase family. GatA subfamily. In terms of assembly, heterotrimer of A, B and C subunits.

It carries out the reaction L-glutamyl-tRNA(Gln) + L-glutamine + ATP + H2O = L-glutaminyl-tRNA(Gln) + L-glutamate + ADP + phosphate + H(+). In terms of biological role, allows the formation of correctly charged Gln-tRNA(Gln) through the transamidation of misacylated Glu-tRNA(Gln) in organisms which lack glutaminyl-tRNA synthetase. The reaction takes place in the presence of glutamine and ATP through an activated gamma-phospho-Glu-tRNA(Gln). This is Glutamyl-tRNA(Gln) amidotransferase subunit A from Rickettsia africae (strain ESF-5).